A 298-amino-acid polypeptide reads, in one-letter code: uncharacterized protein (298 aa).

The next 10 membrane-spanning stretches (helical) occupy residues 5–25 (ILFGVSMILLANLCFGIMSAF), 36–56 (MENVFYRSITMTLLLLLIYPF), 76–96 (VVVGGLAMLAFFYNIEKISLA), 97–117 (TATAFSQCAPIYTVLLSPLLL), 124–144 (STLISACIGIVGVVLISDPSV), 147–167 (VGPVEIFMGILSGIFVSLAYI), 181–201 (VILAFAFGMSLLGLVGMFIDI), 216–236 (ILWISLIGISGTLGQYFLTYA), 244–264 (IIAPIEYTRIVWGLLFGLYLG), and 272–292 (SSLGVALILCSGLLIALPALL). Residues 17–141 (LCFGIMSAFV…GIVGVVLISD (125 aa)) enclose the EamA 1 domain. Positions 183–288 (LAFAFGMSLL…ILCSGLLIAL (106 aa)) constitute an EamA 2 domain.

Belongs to the EamA transporter family.

It localises to the cell membrane. This is an uncharacterized protein from Helicobacter pylori (strain ATCC 700392 / 26695) (Campylobacter pylori).